A 131-amino-acid chain; its full sequence is Agouti-signaling protein (131 aa).

The N-terminal stretch at 1 to 22 (MDVTRLLLATLVGFLCFLTVHS) is a signal peptide. N-linked (GlcNAc...) asparagine glycosylation occurs at N39. The disordered stretch occupies residues 58–96 (KSKKISRKEAEKRKRSSKKKASIKKVARPPPPSPCVATR). A compositionally biased stretch (basic residues) spans 70–84 (RKRSSKKKASIKKVA). 5 cysteine pairs are disulfide-bonded: C92–C107, C99–C113, C106–C124, C110–C131, and C115–C122. The Agouti domain maps to 92-131 (CVATRDSCKPPAPACCNPCASCQCRFFGSACTCRVLNPNC).

The protein localises to the secreted. Functionally, involved in the regulation of melanogenesis. The binding of ASP to MC1R precludes alpha-MSH initiated signaling and thus blocks production of cAMP, leading to a down-regulation of eumelanogenesis (brown/black pigment) and thus increasing synthesis of pheomelanin (yellow/red pigment). The polypeptide is Agouti-signaling protein (Rattus norvegicus (Rat)).